Here is a 190-residue protein sequence, read N- to C-terminus: GTP cyclohydrolase 1 (190 aa).

Zn(2+) is bound by residues Cys-75, His-78, and Cys-146.

This sequence belongs to the GTP cyclohydrolase I family. Toroid-shaped homodecamer, composed of two pentamers of five dimers.

The catalysed reaction is GTP + H2O = 7,8-dihydroneopterin 3'-triphosphate + formate + H(+). Its pathway is cofactor biosynthesis; 7,8-dihydroneopterin triphosphate biosynthesis; 7,8-dihydroneopterin triphosphate from GTP: step 1/1. This Campylobacter jejuni subsp. jejuni serotype O:23/36 (strain 81-176) protein is GTP cyclohydrolase 1.